Reading from the N-terminus, the 168-residue chain is SsrA-binding protein (168 aa).

The protein belongs to the SmpB family.

The protein resides in the cytoplasm. In terms of biological role, required for rescue of stalled ribosomes mediated by trans-translation. Binds to transfer-messenger RNA (tmRNA), required for stable association of tmRNA with ribosomes. tmRNA and SmpB together mimic tRNA shape, replacing the anticodon stem-loop with SmpB. tmRNA is encoded by the ssrA gene; the 2 termini fold to resemble tRNA(Ala) and it encodes a 'tag peptide', a short internal open reading frame. During trans-translation Ala-aminoacylated tmRNA acts like a tRNA, entering the A-site of stalled ribosomes, displacing the stalled mRNA. The ribosome then switches to translate the ORF on the tmRNA; the nascent peptide is terminated with the 'tag peptide' encoded by the tmRNA and targeted for degradation. The ribosome is freed to recommence translation, which seems to be the essential function of trans-translation. This is SsrA-binding protein from Mycobacterium sp. (strain JLS).